The chain runs to 752 residues: Photosystem I P700 chlorophyll a apoprotein A1 (752 aa).

Helical transmembrane passes span Ile-73 to Ala-96, Leu-159 to His-182, Met-198 to Ile-222, Thr-294 to Tyr-312, Trp-349 to Tyr-372, Leu-388 to Val-414, Ala-436 to His-458, and Phe-533 to Val-551. [4Fe-4S] cluster contacts are provided by Cys-575 and Cys-584. 2 helical membrane passes run His-591–Trp-612 and Leu-666–Phe-688. His-677 contributes to the chlorophyll a' binding site. Chlorophyll a is bound by residues Met-685 and Tyr-693. Trp-694 provides a ligand contact to phylloquinone. A helical membrane pass occupies residues Ala-726–Ala-746.

This sequence belongs to the PsaA/PsaB family. The PsaA/B heterodimer binds the P700 chlorophyll special pair and subsequent electron acceptors. PSI consists of a core antenna complex that captures photons, and an electron transfer chain that converts photonic excitation into a charge separation. The eukaryotic PSI reaction center is composed of at least 11 subunits. P700 is a chlorophyll a/chlorophyll a' dimer, A0 is one or more chlorophyll a, A1 is one or both phylloquinones and FX is a shared 4Fe-4S iron-sulfur center. is required as a cofactor.

It localises to the plastid. The protein resides in the chloroplast thylakoid membrane. The enzyme catalyses reduced [plastocyanin] + hnu + oxidized [2Fe-2S]-[ferredoxin] = oxidized [plastocyanin] + reduced [2Fe-2S]-[ferredoxin]. Its function is as follows. PsaA and PsaB bind P700, the primary electron donor of photosystem I (PSI), as well as the electron acceptors A0, A1 and FX. PSI is a plastocyanin/cytochrome c6-ferredoxin oxidoreductase, converting photonic excitation into a charge separation, which transfers an electron from the donor P700 chlorophyll pair to the spectroscopically characterized acceptors A0, A1, FX, FA and FB in turn. Oxidized P700 is reduced on the lumenal side of the thylakoid membrane by plastocyanin or cytochrome c6. The polypeptide is Photosystem I P700 chlorophyll a apoprotein A1 (Gracilaria tenuistipitata var. liui (Red alga)).